A 1082-amino-acid polypeptide reads, in one-letter code: RhoGEF domain-containing protein gxcI (1082 aa).

Residues 1–15 show a composition bias toward polar residues; it reads MRKNSTSNPSPSHQF. Disordered regions lie at residues 1–29, 59–78, 91–394, 438–488, and 504–524; these read MRKNSTSNPSPSHQFLTPPKNTTTVVNNN, DKNQQQQQQQQQQTHQVLPQ, YNEQ…VTSL, KQAS…SVSN, and INSFNSDDSNNSNNSNSSLSL. Low complexity-rich tracts occupy residues 20–29, 62–71, 96–109, 116–160, and 170–184; these read KNTTTVVNNN, QQQQQQQQQQ, PSSSSSTASSSSSP, LLST…SGSP, and PTILSPLPSPRRQLP. Pro residues predominate over residues 185 to 206; it reads TRPPSPLPKLPSRPTSPVPPNP. The segment covering 211–244 has biased composition (low complexity); sequence NTTTTNNNNNNNNNNNNNNNNNNNNNNNNNNNNN. Over residues 262–276 the composition is skewed to pro residues; that stretch reads PIPPPNDKPAPPPRP. The span at 282-366 shows a compositional bias: low complexity; that stretch reads TLTTPPTIAT…NNNNNSNNNK (85 aa). Pro residues predominate over residues 367–379; it reads PLPPTSTKPPRPK. Residues 450-473 are compositionally biased toward low complexity; the sequence is SSLSLSTTPTSVSPSTPSSANPTP. The region spanning 622-817 is the DH domain; sequence SFNKVIKEII…EKIVNDINGK (196 aa). The interval 838–994 is PH-like; it reads QQLRDQTFLK…NDIDEAINIL (157 aa). 2 disordered regions span residues 920–961 and 1017–1060; these read NNNN…NSTP and NNNN…NSNN.

Its function is as follows. GTPase-activating protein. This Dictyostelium discoideum (Social amoeba) protein is RhoGEF domain-containing protein gxcI (gxcI).